A 303-amino-acid polypeptide reads, in one-letter code: MTSRTEAVKAYLLDLQDRICSALETEDGGARFVEDAWVREAGGGGRTRVIGEGNVIEKGGVNFSHVFGSGLPPSASAHRPELAGRGFEALGVSLVIHPHNPHVPTSHANVRFFIAEKEGEEAVWWFGGGFDLTPYYGNEEDCIHWHRVAEQACAPFGADVYPRYKAWCDRYFHLKHRGEPRGIGGLFFDDLNEWDFDTCFAFIRAIGDAFVDAYLPIVQRRKNTPYTPQQREFQEYRRGRYVEFNLVYDRGTLFGLQSGGRTESILMSLPPQVRWGYDWKAAPGSEEARLTEYFLQDRDWLGQ.

Serine 93 contributes to the substrate binding site. Histidine 97 and histidine 107 together coordinate a divalent metal cation. The active-site Proton donor is the histidine 107. 109 to 111 (NVR) is a substrate binding site. The a divalent metal cation site is built by histidine 146 and histidine 176. The important for dimerization stretch occupies residues 241–276 (YVEFNLVYDRGTLFGLQSGGRTESILMSLPPQVRWG). Position 259–261 (259–261 (GGR)) interacts with substrate.

It belongs to the aerobic coproporphyrinogen-III oxidase family. As to quaternary structure, homodimer. It depends on a divalent metal cation as a cofactor.

Its subcellular location is the cytoplasm. The enzyme catalyses coproporphyrinogen III + O2 + 2 H(+) = protoporphyrinogen IX + 2 CO2 + 2 H2O. Its pathway is porphyrin-containing compound metabolism; protoporphyrin-IX biosynthesis; protoporphyrinogen-IX from coproporphyrinogen-III (O2 route): step 1/1. In terms of biological role, involved in the heme biosynthesis. Catalyzes the aerobic oxidative decarboxylation of propionate groups of rings A and B of coproporphyrinogen-III to yield the vinyl groups in protoporphyrinogen-IX. This is Oxygen-dependent coproporphyrinogen-III oxidase from Pseudomonas putida (strain ATCC 47054 / DSM 6125 / CFBP 8728 / NCIMB 11950 / KT2440).